The chain runs to 466 residues: MITLYNTLTRRKETFEPIEPGKVKMYVCGPTVYNYIHIGNARPAINYDVVRRYFEYKGYEVIYVSNFTDVDDKLINRSKELNESVPEIAEKYIKAFYEDVGALNVKKATSNPRVMHHMGEIIDFIKELVDEGYAYESDGDVYFRTRQFDGYGKLSHQSLDDLKVGARIEAGEQKEDALDFTLWKKAKPGEISWNSPFGKGRPGWHIECSVMAYHELGSTIDIHAGGSDLQFPHHENEIAQSEAHNHAPFANYWMHNGFINIDNEKMSKSLGNFILVHDIIKEVDPDVLRFFMISVHYRSPINYNLELVGAARSGLERIRNSYKLIEEREQIASDLEEQSEYIQQIDKILNQFETVMDDDFNTANAVTAWYDLAKLANKYVLENTTSTKVLNRFKEVYSIFSDVLGVPLKSKETEELLDEDIEQLIEERNEARKNKDFARADEIRDMLKARHIILEDTPQGVRFKRG.

Residue cysteine 28 coordinates Zn(2+). Residues 30-40 (PTVYNYIHIGN) carry the 'HIGH' region motif. Cysteine 208, histidine 233, and glutamate 237 together coordinate Zn(2+). Residues 265 to 269 (KMSKS) carry the 'KMSKS' region motif. Lysine 268 contributes to the ATP binding site.

It belongs to the class-I aminoacyl-tRNA synthetase family. Monomer. Zn(2+) serves as cofactor.

The protein localises to the cytoplasm. It carries out the reaction tRNA(Cys) + L-cysteine + ATP = L-cysteinyl-tRNA(Cys) + AMP + diphosphate. The polypeptide is Cysteine--tRNA ligase (Staphylococcus epidermidis (strain ATCC 35984 / DSM 28319 / BCRC 17069 / CCUG 31568 / BM 3577 / RP62A)).